A 219-amino-acid chain; its full sequence is Small ribosomal subunit protein uS3 (219 aa).

In terms of domain architecture, KH type-2 spans 38–106 (IRTYLKKKLY…KLNLEIKEIK (69 aa)).

Belongs to the universal ribosomal protein uS3 family. In terms of assembly, part of the 30S ribosomal subunit. Forms a tight complex with proteins S10 and S14.

Functionally, binds the lower part of the 30S subunit head. Binds mRNA in the 70S ribosome, positioning it for translation. This is Small ribosomal subunit protein uS3 from Lachnoclostridium phytofermentans (strain ATCC 700394 / DSM 18823 / ISDg) (Clostridium phytofermentans).